We begin with the raw amino-acid sequence, 269 residues long: Hydroxyacylglutathione hydrolase (269 aa).

Zn(2+) contacts are provided by His-56, His-58, Asp-60, His-61, His-115, Asp-137, and His-177.

Belongs to the metallo-beta-lactamase superfamily. Glyoxalase II family. In terms of assembly, monomer. Requires Zn(2+) as cofactor.

The catalysed reaction is an S-(2-hydroxyacyl)glutathione + H2O = a 2-hydroxy carboxylate + glutathione + H(+). Its pathway is secondary metabolite metabolism; methylglyoxal degradation; (R)-lactate from methylglyoxal: step 2/2. Its function is as follows. Thiolesterase that catalyzes the hydrolysis of S-D-lactoyl-glutathione to form glutathione and D-lactic acid. This Leptospira borgpetersenii serovar Hardjo-bovis (strain JB197) protein is Hydroxyacylglutathione hydrolase.